The primary structure comprises 500 residues: MSNMQQKTDVILIGAGIMSATLGSLLKELAPEWEIKVFEKLASAGEESSNEWNNAGTGHSALCELNYTSEKSDGSIDIGKAVKVNEQFQLSRQFWAYLVKSKLIRNPQDFIMPLPHMSLVQGEKNVEFLKNRFEALSKNPLFQGMEFSDAPETLKKWLPLIMEGRTSNEPMAATKIDSGTDVNFGALTRMLFDYLKTKNVELNYKHSVENIKRTKNGLWEVKVHDMNSGKIEHHTAKFVFIGGGGGSLPLLQKTGIPESKHIGGFPVSGLFMVCKNQKVVEQHHAKVYGKAKVGAPPMSVPHLDTRYIDNKKALLFGPFAGFSPKFLKTGSNLDLIGSVKPNNVLTMLAAGVKEMGLTKYLIQQVMLSHEKRMEELREFIPNAKSEDWDIVVAGQRVQVIKDTDAGGKGTLQFGTEVVSAADGSIAALLGASPGASTAVHVMLEVLEKCFPSRMVEWEEKIKEMIPSYGISLTENPRLFQDLHTSTGRTLGLNEKETVHN.

This sequence belongs to the MQO family. FAD serves as cofactor.

It carries out the reaction (S)-malate + a quinone = a quinol + oxaloacetate. Its pathway is carbohydrate metabolism; tricarboxylic acid cycle; oxaloacetate from (S)-malate (quinone route): step 1/1. The polypeptide is Probable malate:quinone oxidoreductase (Bacillus cereus (strain G9842)).